A 200-amino-acid polypeptide reads, in one-letter code: Dephospho-CoA kinase (200 aa).

The 199-residue stretch at 2–200 (LIAVVGKAGV…CHHGHYQTPK (199 aa)) folds into the DPCK domain. Residue 10 to 15 (GVGKTT) participates in ATP binding.

This sequence belongs to the CoaE family.

The protein localises to the cytoplasm. The catalysed reaction is 3'-dephospho-CoA + ATP = ADP + CoA + H(+). Its pathway is cofactor biosynthesis; coenzyme A biosynthesis; CoA from (R)-pantothenate: step 5/5. Its function is as follows. Catalyzes the phosphorylation of the 3'-hydroxyl group of dephosphocoenzyme A to form coenzyme A. This chain is Dephospho-CoA kinase, found in Mycoplasma pneumoniae (strain ATCC 29342 / M129 / Subtype 1) (Mycoplasmoides pneumoniae).